Reading from the N-terminus, the 401-residue chain is Tumor necrosis factor receptor superfamily member 11B (401 aa).

The signal sequence occupies residues 1–21; it reads MNNLLCCALVFLDISIKWTTQ. TNFR-Cys repeat units lie at residues 24–62, 65–105, 107–142, and 145–185; these read FPPKYLHYDEETSHQLLCDKCPPGTYLKQHCTAKWKTVC, CPDH…NRVC, CKEGRYLEIEFCLKHRSCPPGFGVVQAGTPERNTVC, and CPDG…DNIC. Disulfide bonds link C41/C54, C44/C62, C65/C80, C83/C97, C87/C105, C107/C118, C124/C142, and C145/C160. A glycan (N-linked (GlcNAc...) asparagine) is linked at N98. N-linked (GlcNAc...) asparagine glycans are attached at residues N152, N165, and N178. Cysteines 166 and 185 form a disulfide. 2 consecutive Death domains span residues 198–269 and 270–365; these read DVTL…IVKK and IIQD…TQSL. N289 is a glycosylation site (N-linked (GlcNAc...) asparagine).

As to quaternary structure, homodimer. Interacts with TNFSF10 and TNFSF11. N-glycosylated. Contains sialic acid residues. Post-translationally, the N-terminus is blocked. Highly expressed in adult lung, heart, kidney, liver, spleen, thymus, prostate, ovary, small intestine, thyroid, lymph node, trachea, adrenal gland, testis, and bone marrow. Detected at very low levels in brain, placenta and skeletal muscle. Highly expressed in fetal kidney, liver and lung.

It is found in the secreted. Its function is as follows. Acts as a decoy receptor for TNFSF11/RANKL and thereby neutralizes its function in osteoclastogenesis. Inhibits the activation of osteoclasts and promotes osteoclast apoptosis in vitro. Bone homeostasis seems to depend on the local ratio between TNFSF11 and TNFRSF11B. May also play a role in preventing arterial calcification. May act as decoy receptor for TNFSF10/TRAIL and protect against apoptosis. TNFSF10/TRAIL binding blocks the inhibition of osteoclastogenesis. The chain is Tumor necrosis factor receptor superfamily member 11B (TNFRSF11B) from Homo sapiens (Human).